Here is a 301-residue protein sequence, read N- to C-terminus: Glucose-1-phosphate adenylyltransferase large subunit (301 aa).

It belongs to the bacterial/plant glucose-1-phosphate adenylyltransferase family. As to quaternary structure, heterotetramer.

The protein resides in the plastid. Its subcellular location is the chloroplast. The protein localises to the amyloplast. The catalysed reaction is alpha-D-glucose 1-phosphate + ATP + H(+) = ADP-alpha-D-glucose + diphosphate. It functions in the pathway glycan biosynthesis; starch biosynthesis. Its activity is regulated as follows. Insensitive to 3'phosphoglycerate and orthophosphate. In terms of biological role, this protein plays a role in synthesis of starch. It catalyzes the synthesis of the activated glycosyl donor, ADP-glucose from Glc-1-P and ATP. This chain is Glucose-1-phosphate adenylyltransferase large subunit (AGA.1), found in Triticum aestivum (Wheat).